A 268-amino-acid chain; its full sequence is uncharacterized protein (268 aa).

The first 18 residues, 1–18 (MRGFLLLSLGVFSFSALA), serve as a signal peptide directing secretion. Domain stretches follow at residues 24-184 (SHDL…ELLP) and 185-268 (SPAT…NWLR). Cys110 and Cys115 form a disulfide bridge.

As to quaternary structure, monomer.

It localises to the periplasm. This is an uncharacterized protein from Pseudomonas aeruginosa (strain ATCC 15692 / DSM 22644 / CIP 104116 / JCM 14847 / LMG 12228 / 1C / PRS 101 / PAO1).